The primary structure comprises 240 residues: Putative outer membrane protein RT0057 (240 aa).

The first 20 residues, 1–20 (MLKKLCVILFISSITINSHA), serve as a signal peptide directing secretion.

This sequence belongs to the OmpW/AlkL family.

The protein resides in the cell outer membrane. This Rickettsia typhi (strain ATCC VR-144 / Wilmington) protein is Putative outer membrane protein RT0057.